The sequence spans 218 residues: Ribosomal RNA small subunit methyltransferase J (218 aa).

Residues 55–56, 71–72, and Asp123 each bind S-adenosyl-L-methionine; these read RD and ER.

Belongs to the methyltransferase superfamily. RsmJ family.

It is found in the cytoplasm. It catalyses the reaction guanosine(1516) in 16S rRNA + S-adenosyl-L-methionine = N(2)-methylguanosine(1516) in 16S rRNA + S-adenosyl-L-homocysteine + H(+). Its function is as follows. Specifically methylates the guanosine in position 1516 of 16S rRNA. The polypeptide is Ribosomal RNA small subunit methyltransferase J (Rhodopseudomonas palustris (strain HaA2)).